Reading from the N-terminus, the 145-residue chain is MPHILILNGPNLNRLGKREPDVYGTDTLTDLEQRLFQFAEGIQTELTFFQSNHEGDLIDALHEAEEQYDGIVLNPGAFSHYSYALRDAVAAISIPVIEVHLSNPHAREEFRHRSVIAPVARGQITGLGFEGYKLAISYFMNTNNK.

Catalysis depends on tyrosine 23, which acts as the Proton acceptor. Residues asparagine 74, histidine 80, and aspartate 87 each contribute to the substrate site. The active-site Proton donor is the histidine 100. Substrate is bound by residues 101 to 102 and arginine 111; that span reads LS.

This sequence belongs to the type-II 3-dehydroquinase family. In terms of assembly, homododecamer.

The catalysed reaction is 3-dehydroquinate = 3-dehydroshikimate + H2O. It functions in the pathway metabolic intermediate biosynthesis; chorismate biosynthesis; chorismate from D-erythrose 4-phosphate and phosphoenolpyruvate: step 3/7. Functionally, catalyzes a trans-dehydration via an enolate intermediate. This Bacillus licheniformis (strain ATCC 14580 / DSM 13 / JCM 2505 / CCUG 7422 / NBRC 12200 / NCIMB 9375 / NCTC 10341 / NRRL NRS-1264 / Gibson 46) protein is 3-dehydroquinate dehydratase.